Reading from the N-terminus, the 443-residue chain is Amino-acid acetyltransferase (443 aa).

Residues 296–443 (EQIRRATIND…KSKVLMADLG (148 aa)) form the N-acetyltransferase domain.

Belongs to the acetyltransferase family. ArgA subfamily. In terms of assembly, homohexamer.

Its subcellular location is the cytoplasm. It catalyses the reaction L-glutamate + acetyl-CoA = N-acetyl-L-glutamate + CoA + H(+). It participates in amino-acid biosynthesis; L-arginine biosynthesis; N(2)-acetyl-L-ornithine from L-glutamate: step 1/4. This chain is Amino-acid acetyltransferase (argA), found in Escherichia coli O157:H7.